The chain runs to 202 residues: MCYVKCARYIGYSLVWAAVFCIVANALLYFPNGETKYATEDHLSRFVWYFAGIVGGGLLMLLPAFVFIGMDEEDCCGCCGYENYGKRCSMLSSVLAALIGIVGSAYCVIVASLGLAEGPKCSDAHGVWNYTFASTEGQYLLNSSMWSKCYEPKHIVEWHVTLFSILLAFAAVEFILCLIQVINGMLGGLCGYCCSRQQQYNC.

Residues 1-9 (MCYVKCARY) lie on the Cytoplasmic side of the membrane. The helical transmembrane segment at 10–30 (IGYSLVWAAVFCIVANALLYF) threads the bilayer. Over 31–49 (PNGETKYATEDHLSRFVWY) the chain is Extracellular. The helical transmembrane segment at 50–70 (FAGIVGGGLLMLLPAFVFIGM) threads the bilayer. Over 71–93 (DEEDCCGCCGYENYGKRCSMLSS) the chain is Cytoplasmic. A helical membrane pass occupies residues 94–114 (VLAALIGIVGSAYCVIVASLG). The Extracellular portion of the chain corresponds to 115 to 161 (LAEGPKCSDAHGVWNYTFASTEGQYLLNSSMWSKCYEPKHIVEWHVT). 2 N-linked (GlcNAc...) asparagine glycosylation sites follow: Asn129 and Asn142. Residues 162–182 (LFSILLAFAAVEFILCLIQVI) traverse the membrane as a helical segment. Residues 183 to 202 (NGMLGGLCGYCCSRQQQYNC) are Cytoplasmic-facing.

The protein belongs to the L6 tetraspanin family. In terms of assembly, present in high molecular weight complexes in tumor cells. Interacts with SDCBP2. In terms of tissue distribution, highly expressed in skin and lung. Moderately expressed in lymph nodes and kidneys. Also present in thymic stroma and fibroblasts.

Its subcellular location is the membrane. This is Transmembrane 4 L6 family member 1 (Tm4sf1) from Mus musculus (Mouse).